A 390-amino-acid polypeptide reads, in one-letter code: 3-ketoacyl-CoA thiolase (390 aa).

The Acyl-thioester intermediate role is filled by Cys95. Active-site proton acceptor residues include His346 and Cys376.

It belongs to the thiolase-like superfamily. Thiolase family. As to quaternary structure, heterotetramer of two alpha chains (FadB) and two beta chains (FadA).

Its subcellular location is the cytoplasm. The enzyme catalyses an acyl-CoA + acetyl-CoA = a 3-oxoacyl-CoA + CoA. It participates in lipid metabolism; fatty acid beta-oxidation. Its function is as follows. Catalyzes the final step of fatty acid oxidation in which acetyl-CoA is released and the CoA ester of a fatty acid two carbons shorter is formed. This chain is 3-ketoacyl-CoA thiolase, found in Acinetobacter baylyi (strain ATCC 33305 / BD413 / ADP1).